The following is a 54-amino-acid chain: U1-ctenitoxin-Pr1a (54 aa).

Intrachain disulfides connect Cys2-Cys19, Cys9-Cys25, Cys16-Cys51, Cys18-Cys39, and Cys27-Cys37.

Expressed by the venom gland.

It localises to the secreted. Its function is as follows. Omega-agatoxins are antagonists of voltage-gated calcium channels (Cav). Causes rapid general flaccid paralysis followed by death in 10-30 minutes when injected in mice at dose levels of 5 ug per mouse. This Phoneutria reidyi (Brazilian Amazonian armed spider) protein is U1-ctenitoxin-Pr1a.